The primary structure comprises 424 residues: Histidine--tRNA ligase (424 aa).

This sequence belongs to the class-II aminoacyl-tRNA synthetase family. In terms of assembly, homodimer.

The protein resides in the cytoplasm. It catalyses the reaction tRNA(His) + L-histidine + ATP = L-histidyl-tRNA(His) + AMP + diphosphate + H(+). This chain is Histidine--tRNA ligase, found in Shewanella pealeana (strain ATCC 700345 / ANG-SQ1).